A 115-amino-acid chain; its full sequence is Basic leucine zipper transcriptional factor ATF-like (115 aa).

Residues 1–57 form a disordered region; sequence MQQEPDRNEQGYCSSPPSSNKQDSSDDTKKIQRREKNRIAAQKSRQRQTQKADSLHI. Positions 27–90 constitute a bZIP domain; the sequence is DTKKIQRREK…KYLTCVLSTH (64 aa). A basic motif region spans residues 29–51; it reads KKIQRREKNRIAAQKSRQRQTQK. The tract at residues 55-83 is leucine-zipper; it reads LHIESENLERLNSALRGEISGLREELKYL.

The protein belongs to the bZIP family.

Its subcellular location is the nucleus. The protein localises to the cytoplasm. AP-1 family transcription factor that controls the differentiation of lineage-specific cells in the immune system: specifically mediates the differentiation of T-helper 17 cells (Th17), follicular T-helper cells (TfH), CD8(+) dendritic cells and class-switch recombination (CSR) in B-cells. The sequence is that of Basic leucine zipper transcriptional factor ATF-like (batf) from Xenopus tropicalis (Western clawed frog).